The primary structure comprises 355 residues: Uroporphyrinogen decarboxylase (355 aa).

Substrate contacts are provided by residues 27–31 (RQAGR), Asp-78, Tyr-155, Ser-210, and His-328.

This sequence belongs to the uroporphyrinogen decarboxylase family. Homodimer.

The protein localises to the cytoplasm. It catalyses the reaction uroporphyrinogen III + 4 H(+) = coproporphyrinogen III + 4 CO2. The protein operates within porphyrin-containing compound metabolism; protoporphyrin-IX biosynthesis; coproporphyrinogen-III from 5-aminolevulinate: step 4/4. Catalyzes the decarboxylation of four acetate groups of uroporphyrinogen-III to yield coproporphyrinogen-III. This is Uroporphyrinogen decarboxylase from Azotobacter vinelandii (strain DJ / ATCC BAA-1303).